The primary structure comprises 231 residues: Orotidine 5'-phosphate decarboxylase (231 aa).

Residues Asp11, Lys33, 60–69, Thr120, Arg181, Gln190, Gly210, and Arg211 each bind substrate; that span reads DLKFHDIPNT. Lys62 (proton donor) is an active-site residue.

Belongs to the OMP decarboxylase family. Type 1 subfamily. In terms of assembly, homodimer.

It carries out the reaction orotidine 5'-phosphate + H(+) = UMP + CO2. It functions in the pathway pyrimidine metabolism; UMP biosynthesis via de novo pathway; UMP from orotate: step 2/2. In terms of biological role, catalyzes the decarboxylation of orotidine 5'-monophosphate (OMP) to uridine 5'-monophosphate (UMP). The chain is Orotidine 5'-phosphate decarboxylase from Vibrio atlanticus (strain LGP32) (Vibrio splendidus (strain Mel32)).